The primary structure comprises 413 residues: Probable glucan 1,3-beta-glucosidase ARB_04467 (413 aa).

Positions 1 to 17 are cleaved as a signal peptide; the sequence is MKFGSLLGLSLVGLSVA. Substrate-binding residues include Glu46, Glu202, and Tyr262. Glu202 serves as the catalytic Proton donor. A disulfide bridge links Cys282 with Cys412. Residue Glu300 is the Nucleophile of the active site.

It belongs to the glycosyl hydrolase 5 (cellulase A) family. In terms of assembly, monomer.

The protein localises to the secreted. Its subcellular location is the cell wall. The enzyme catalyses Successive hydrolysis of beta-D-glucose units from the non-reducing ends of (1-&gt;3)-beta-D-glucans, releasing alpha-glucose.. Its function is as follows. Major glucan 1,3-beta-glucosidase required for cell wall integrity. Beta-glucanases participate in the metabolism of beta-glucan, the main structural component of the cell wall. Can also function biosynthetically as a transglycosylase. Functions to deliver glucan from the cell to the extracellular matrix. Involved in cell-substrate and cell-cell adhesion. The polypeptide is Probable glucan 1,3-beta-glucosidase ARB_04467 (Arthroderma benhamiae (strain ATCC MYA-4681 / CBS 112371) (Trichophyton mentagrophytes)).